A 325-amino-acid polypeptide reads, in one-letter code: UPF0164 protein TP_0856 (325 aa).

The first 28 residues, 1 to 28 (MVHYKSVFYKSAALVCGFVLAGASVAIA), serve as a signal peptide directing secretion.

Belongs to the UPF0164 family.

The polypeptide is UPF0164 protein TP_0856 (Treponema pallidum (strain Nichols)).